The following is a 327-amino-acid chain: Gamma-resorcylate decarboxylase (327 aa).

Zn(2+) contacts are provided by glutamate 8 and histidine 10. 3 residues coordinate 2,6-dihydroxybenzoate: phenylalanine 23, histidine 164, and aspartate 287. Zn(2+) is bound by residues histidine 164 and aspartate 287. The active site involves aspartate 287.

The protein belongs to the metallo-dependent hydrolases superfamily. ACMSD family. In terms of assembly, homotetramer. Dimer of dimers. Zn(2+) serves as cofactor.

The enzyme catalyses 2,6-dihydroxybenzoate + H(+) = resorcinol + CO2. The catalysed reaction is 2,3-dihydroxybenzoate + H(+) = catechol + CO2. The protein operates within aromatic compound metabolism. Inhibited by CuCl(2), monoiodoacetate and diethylpyrocarbonate. Inhibited by 2,3-dihydroxybenzaldehyde, which is an analog of the substrate 2,3-dihydroxybenzoate. Its function is as follows. Involved in the gamma-resorcylate (2,6-dihydroxybenzoate) catabolism. Catalyzes the reversible decarboxylation of gamma-resorcylate to resorcinol. The reaction is reversible, but equilibrium greatly favors the decarboxylation reaction. Also catalyzes the decarboxylation of 2,3-dihydroxybenzoate to catechol, but does not act on 2,4-dihydroxybenzoate, 2,5-dihydroxybenzoate, 3,4-dihydroxybenzoate, 3,5-dihydroxybenzoate, 2-hydroxybenzoate, or 3-hydroxybenzoate. Only resorcinol is carboxylated by the reverse reaction. The polypeptide is Gamma-resorcylate decarboxylase (Rhizobium sp. (strain MTP-10005)).